Consider the following 175-residue polypeptide: ATP-dependent protease subunit HslV (175 aa).

Thr2 is an active-site residue. Residues Ala156, Cys159, and Thr162 each contribute to the Na(+) site.

Belongs to the peptidase T1B family. HslV subfamily. A double ring-shaped homohexamer of HslV is capped on each side by a ring-shaped HslU homohexamer. The assembly of the HslU/HslV complex is dependent on binding of ATP.

Its subcellular location is the cytoplasm. The enzyme catalyses ATP-dependent cleavage of peptide bonds with broad specificity.. With respect to regulation, allosterically activated by HslU binding. Functionally, protease subunit of a proteasome-like degradation complex believed to be a general protein degrading machinery. This chain is ATP-dependent protease subunit HslV, found in Rhizobium rhizogenes (strain K84 / ATCC BAA-868) (Agrobacterium radiobacter).